The chain runs to 1426 residues: Ferlin 2 (1426 aa).

5 C2 domains span residues methionine 1–lysine 111, arginine 161–phenylalanine 279, glutamate 512–threonine 638, serine 1031–methionine 1154, and lysine 1189–serine 1318. A disordered region spans residues serine 1357–glutamine 1377. Positions proline 1366–glutamine 1377 are enriched in basic and acidic residues. A helical membrane pass occupies residues valine 1404–leucine 1424.

This sequence belongs to the ferlin family.

Its subcellular location is the membrane. It localises to the inner membrane complex. It is found in the cytoplasmic vesicle. The protein resides in the secretory vesicle. The protein localises to the rhoptry. Its function is as follows. Regulates rhoptry secretion. Required for completing the lytic cycle. Required for host cell invasion. Not required for microneme secretion and conoid extrusion. In Toxoplasma gondii, this protein is Ferlin 2.